A 507-amino-acid chain; its full sequence is Transcription factor CP2 (507 aa).

The Grh/CP2 DB domain maps to 61-300 (ENKILPFQYV…SPGFNSSHNS (240 aa)). Residues 133 to 395 (EHQQLEGWRW…LFNALKGRMV (263 aa)) form a DNA-binding region. 2 disordered regions span residues 240–268 (PKGA…YQPS) and 296–316 (SSHN…QPEP). The segment covering 241–265 (KGADRKQKTDREKMEKRTPQEKEKY) has biased composition (basic and acidic residues).

Belongs to the grh/CP2 family. CP2 subfamily. Component of the SSP (stage selector protein) complex, which appears to be a heteromer of TFCP2 and 2 copies of NFE4.

The protein resides in the nucleus. Functionally, may function as a transcription factor. The chain is Transcription factor CP2 (tfcp2) from Xenopus tropicalis (Western clawed frog).